Reading from the N-terminus, the 176-residue chain is Ribosome maturation factor RimM (176 aa).

A PRC barrel domain is found at 100-173 (EGEFHLLDLV…WLRLTPPPGL (74 aa)).

This sequence belongs to the RimM family. Binds ribosomal protein uS19.

The protein localises to the cytoplasm. In terms of biological role, an accessory protein needed during the final step in the assembly of 30S ribosomal subunit, possibly for assembly of the head region. Essential for efficient processing of 16S rRNA. May be needed both before and after RbfA during the maturation of 16S rRNA. It has affinity for free ribosomal 30S subunits but not for 70S ribosomes. This chain is Ribosome maturation factor RimM, found in Prochlorococcus marinus (strain MIT 9303).